A 136-amino-acid chain; its full sequence is Calcitonin (136 aa).

Positions 1-25 (MGFLKFSPFLVVSILLLYQACGLQA) are cleaved as a signal peptide. Positions 26 to 82 (VPLRSTLESSPGMATLSEEEARLLAALVQNYMQMKVRELEQEEEQEAEGSSLDSPRS) are excised as a propeptide. Serine 42 bears the Phosphoserine mark. The disordered stretch occupies residues 64 to 84 (LEQEEEQEAEGSSLDSPRSKR). Cysteines 85 and 91 form a disulfide. N-linked (GlcNAc...) asparagine glycosylation is present at asparagine 87. Positions 114 to 136 (GAPGKKRDMAKDLETNHHPYFGN) are disordered. Proline 116 carries the post-translational modification Proline amide. The span at 118–130 (KKRDMAKDLETNH) shows a compositional bias: basic and acidic residues. Residues 121–136 (DMAKDLETNHHPYFGN) constitute a propeptide that is removed on maturation.

The protein belongs to the calcitonin family.

The protein resides in the secreted. Functionally, calcitonin is a peptide hormone that causes a rapid but short-lived drop in the level of calcium and phosphate in blood by promoting the incorporation of those ions in the bones. Calcitonin function is mediated by the calcitonin receptor/CALCR and the CALCR-RAMP2 (AMYR2) receptor complex. This Rattus norvegicus (Rat) protein is Calcitonin.